Consider the following 484-residue polypeptide: Myosin-binding protein H (484 aa).

Residues 1–78 are disordered; that stretch reads MTGKATPEAS…KPEAPSEDVP (78 aa). Phosphothreonine is present on residues T2, T6, and T26. A compositionally biased stretch (low complexity) spans 41-71; it reads QEQAPEPQKQPQAQDPAAHEAPATPATTKPE. One can recognise a Fibronectin type-III 1 domain in the interval 80–175; that stretch reads APLQLTLEDV…LDQPVHIQEI (96 aa). Positions 179–267 constitute an Ig-like C2-type 1 domain; that stretch reads PKIRVPRHLR…EGLEAKAAID (89 aa). The 96-residue stretch at 276–371 folds into the Fibronectin type-III 2 domain; that stretch reads PPSSIKLLDV…TKELAHIHKA (96 aa). Residues 389-479 form the Ig-like C2-type 2 domain; that stretch reads PSFTQPVADR…PAVDCRLEVK (91 aa).

Belongs to the immunoglobulin superfamily. MyBP family. As to expression, skeletal muscle.

Functionally, binds to myosin; probably involved in interaction with thick myofilaments in the A-band. This is Myosin-binding protein H (Mybph) from Rattus norvegicus (Rat).